The following is a 657-amino-acid chain: UvrABC system protein B (657 aa).

Positions 25-182 (KSIKKGNEFQ…KKLIEIQYER (158 aa)) constitute a Helicase ATP-binding domain. 38-45 (GVTGSGKT) contacts ATP. Residues 91-114 (YYDYYQPEAYVPQTDTFIEKDASI) carry the Beta-hairpin motif. Positions 429–595 (QIDDLYTEIQ…TINKEVRDLI (167 aa)) constitute a Helicase C-terminal domain. Residues 621–656 (KKLIKEYTEEMMLAAKNLQFERAAQLRDEIEELKGK) form the UVR domain.

This sequence belongs to the UvrB family. In terms of assembly, forms a heterotetramer with UvrA during the search for lesions. Interacts with UvrC in an incision complex.

The protein resides in the cytoplasm. Its function is as follows. The UvrABC repair system catalyzes the recognition and processing of DNA lesions. A damage recognition complex composed of 2 UvrA and 2 UvrB subunits scans DNA for abnormalities. Upon binding of the UvrA(2)B(2) complex to a putative damaged site, the DNA wraps around one UvrB monomer. DNA wrap is dependent on ATP binding by UvrB and probably causes local melting of the DNA helix, facilitating insertion of UvrB beta-hairpin between the DNA strands. Then UvrB probes one DNA strand for the presence of a lesion. If a lesion is found the UvrA subunits dissociate and the UvrB-DNA preincision complex is formed. This complex is subsequently bound by UvrC and the second UvrB is released. If no lesion is found, the DNA wraps around the other UvrB subunit that will check the other stand for damage. This is UvrABC system protein B from Clostridium botulinum (strain Alaska E43 / Type E3).